The following is a 223-amino-acid chain: Protein-lysine N-methyltransferase CG9154 (223 aa).

It belongs to the class I-like SAM-binding methyltransferase superfamily. EFM5 family.

The protein localises to the cytoplasm. Functionally, S-adenosyl-L-methionine-dependent protein-lysine N-methyltransferase that methylates elongation factor 1-alpha. The polypeptide is Protein-lysine N-methyltransferase CG9154 (Drosophila melanogaster (Fruit fly)).